A 379-amino-acid polypeptide reads, in one-letter code: Queuine tRNA-ribosyltransferase (379 aa).

Residue Asp96 is the Proton acceptor of the active site. Residues 96–100 (DSGGF), Asp150, Gln196, and Gly223 each bind substrate. The interval 254 to 260 (GIGTPDY) is RNA binding. The active-site Nucleophile is the Asp273. 4 residues coordinate Zn(2+): Cys311, Cys313, Cys316, and His342.

Belongs to the queuine tRNA-ribosyltransferase family. Homodimer. Within each dimer, one monomer is responsible for RNA recognition and catalysis, while the other monomer binds to the replacement base PreQ1. Requires Zn(2+) as cofactor.

It carries out the reaction 7-aminomethyl-7-carbaguanine + guanosine(34) in tRNA = 7-aminomethyl-7-carbaguanosine(34) in tRNA + guanine. It functions in the pathway tRNA modification; tRNA-queuosine biosynthesis. Catalyzes the base-exchange of a guanine (G) residue with the queuine precursor 7-aminomethyl-7-deazaguanine (PreQ1) at position 34 (anticodon wobble position) in tRNAs with GU(N) anticodons (tRNA-Asp, -Asn, -His and -Tyr). Catalysis occurs through a double-displacement mechanism. The nucleophile active site attacks the C1' of nucleotide 34 to detach the guanine base from the RNA, forming a covalent enzyme-RNA intermediate. The proton acceptor active site deprotonates the incoming PreQ1, allowing a nucleophilic attack on the C1' of the ribose to form the product. After dissociation, two additional enzymatic reactions on the tRNA convert PreQ1 to queuine (Q), resulting in the hypermodified nucleoside queuosine (7-(((4,5-cis-dihydroxy-2-cyclopenten-1-yl)amino)methyl)-7-deazaguanosine). In Treponema denticola (strain ATCC 35405 / DSM 14222 / CIP 103919 / JCM 8153 / KCTC 15104), this protein is Queuine tRNA-ribosyltransferase.